Here is a 72-residue protein sequence, read N- to C-terminus: Large ribosomal subunit protein bL31 (72 aa).

4 residues coordinate Zn(2+): C16, C18, C37, and C40.

Belongs to the bacterial ribosomal protein bL31 family. Type A subfamily. As to quaternary structure, part of the 50S ribosomal subunit. It depends on Zn(2+) as a cofactor.

In terms of biological role, binds the 23S rRNA. This chain is Large ribosomal subunit protein bL31, found in Buchnera aphidicola subsp. Acyrthosiphon pisum (strain Tuc7).